We begin with the raw amino-acid sequence, 115 residues long: U17-barytoxin-Tl1c (115 aa).

Positions M1–A20 are cleaved as a signal peptide. Residues K21 to R74 constitute a propeptide that is removed on maturation. Disulfide bonds link C75–C89, C82–C94, and C88–C109.

The protein belongs to the neurotoxin 14 (magi-1) family. 03 (ICK-30-40) subfamily. In terms of tissue distribution, expressed by the venom gland.

It localises to the secreted. Its function is as follows. Ion channel inhibitor. The chain is U17-barytoxin-Tl1c from Trittame loki (Brush-footed trapdoor spider).